Reading from the N-terminus, the 229-residue chain is Dephospho-CoA kinase (229 aa).

Residues 3 to 203 enclose the DPCK domain; sequence TVGLTGGIGS…ARRDAKATAK (201 aa). Position 11–16 (11–16) interacts with ATP; it reads GSGKSA. A disordered region spans residues 203–229; that stretch reads KATAKAETVASGTDTAASGTDTAAPAG.

Belongs to the CoaE family.

The protein localises to the cytoplasm. The enzyme catalyses 3'-dephospho-CoA + ATP = ADP + CoA + H(+). Its pathway is cofactor biosynthesis; coenzyme A biosynthesis; CoA from (R)-pantothenate: step 5/5. Its function is as follows. Catalyzes the phosphorylation of the 3'-hydroxyl group of dephosphocoenzyme A to form coenzyme A. The polypeptide is Dephospho-CoA kinase (Frankia casuarinae (strain DSM 45818 / CECT 9043 / HFP020203 / CcI3)).